A 414-amino-acid chain; its full sequence is MLTEKSPIHVNSEIGRLKTVILHRPGKEIENLTPDTMGPLLFDDIPYLLLAQKEHDNFADTLRKKGVEVLYLERLVVQALETDEQVKAFFIDKMIAESGFKSGTIHAQLQKFLVGLPTNEMVDKIMAGVRFDEIELASKDLQNFSFDRTRPFLMAPMPNLYFTRDPSASIGDGLTINRMTFKARRRESMFTELVINHHPRFANKNINVWRDRNHVARLEGGDELVLSDHVLAIGLSQRTSSEAIKDVAKNLFAGSNYDTVIAIQIPQTHATMHLDTVFTMVNFDQFTVHPMILNNKGELPILVMHKDKQNQIKIESSNNLKTVLKEQLGLNELDLISTGDGDPIISAREQWNDGSNTLAIAPGSVVTYDRNYVSNEALRKHGIQVSEVPSSEISRGRGGPRCMSMPIYREDIEK.

Cys-402 (amidino-cysteine intermediate) is an active-site residue.

This sequence belongs to the arginine deiminase family.

The protein resides in the cytoplasm. It carries out the reaction L-arginine + H2O = L-citrulline + NH4(+). It functions in the pathway amino-acid degradation; L-arginine degradation via ADI pathway; carbamoyl phosphate from L-arginine: step 1/2. The chain is Arginine deiminase from Oenococcus oeni (strain ATCC BAA-331 / PSU-1).